A 321-amino-acid polypeptide reads, in one-letter code: Tetraacyldisaccharide 4'-kinase (321 aa).

54-61 serves as a coordination point for ATP; sequence SVGGTGKT.

The protein belongs to the LpxK family.

The catalysed reaction is a lipid A disaccharide + ATP = a lipid IVA + ADP + H(+). It functions in the pathway glycolipid biosynthesis; lipid IV(A) biosynthesis; lipid IV(A) from (3R)-3-hydroxytetradecanoyl-[acyl-carrier-protein] and UDP-N-acetyl-alpha-D-glucosamine: step 6/6. Its function is as follows. Transfers the gamma-phosphate of ATP to the 4'-position of a tetraacyldisaccharide 1-phosphate intermediate (termed DS-1-P) to form tetraacyldisaccharide 1,4'-bis-phosphate (lipid IVA). The sequence is that of Tetraacyldisaccharide 4'-kinase from Rickettsia africae (strain ESF-5).